Reading from the N-terminus, the 626-residue chain is DNA polymerase 2 (626 aa).

The protein belongs to the DNA polymerase type-B family.

It catalyses the reaction DNA(n) + a 2'-deoxyribonucleoside 5'-triphosphate = DNA(n+1) + diphosphate. In terms of biological role, this polymerase is devoid of exonuclease activity. The polypeptide is DNA polymerase 2 (dpo2) (Saccharolobus solfataricus (strain ATCC 35092 / DSM 1617 / JCM 11322 / P2) (Sulfolobus solfataricus)).